The sequence spans 631 residues: Glutamyl-tRNA(Gln) amidotransferase subunit E (631 aa).

Belongs to the GatB/GatE family. GatE subfamily. As to quaternary structure, heterodimer of GatD and GatE.

It carries out the reaction L-glutamyl-tRNA(Gln) + L-glutamine + ATP + H2O = L-glutaminyl-tRNA(Gln) + L-glutamate + ADP + phosphate + H(+). Functionally, allows the formation of correctly charged Gln-tRNA(Gln) through the transamidation of misacylated Glu-tRNA(Gln) in organisms which lack glutaminyl-tRNA synthetase. The reaction takes place in the presence of glutamine and ATP through an activated gamma-phospho-Glu-tRNA(Gln). The GatDE system is specific for glutamate and does not act on aspartate. The chain is Glutamyl-tRNA(Gln) amidotransferase subunit E from Methanococcus maripaludis (strain DSM 14266 / JCM 13030 / NBRC 101832 / S2 / LL).